The sequence spans 292 residues: NAD kinase (292 aa).

Catalysis depends on D73, which acts as the Proton acceptor. Residues D73–G74, N147–E148, H158, R175, D177, T188–S193, and Q247 contribute to the NAD(+) site.

The protein belongs to the NAD kinase family. It depends on a divalent metal cation as a cofactor.

Its subcellular location is the cytoplasm. The enzyme catalyses NAD(+) + ATP = ADP + NADP(+) + H(+). Functionally, involved in the regulation of the intracellular balance of NAD and NADP, and is a key enzyme in the biosynthesis of NADP. Catalyzes specifically the phosphorylation on 2'-hydroxyl of the adenosine moiety of NAD to yield NADP. This chain is NAD kinase, found in Escherichia coli O157:H7.